A 1428-amino-acid polypeptide reads, in one-letter code: uncharacterized protein (1428 aa).

Disordered regions lie at residues 1 to 53, 249 to 274, and 377 to 413; these read MAKK…AFKV, DIKHTPNKETQPSNQVDDSLKSKDSK, and KNGIQEDSQSTDDSSKDDDNNSESNDMSPHNDAETRA. Residues 16–33 show a composition bias toward polar residues; it reads ATTSIPSRSASSPANKNQ. Positions 34–51 are enriched in basic and acidic residues; it reads VKGEKNNKTQKVEPKNAF. Polar residues predominate over residues 256–265; it reads KETQPSNQVD. Residues 641 to 811 enclose the Helicase ATP-binding domain; that stretch reads IDAVNNSQLL…FEGSNLITIP (171 aa). 654-661 contributes to the ATP binding site; it reads GDTGCGKS. The DEAH box motif lies at 758-761; the sequence is DEVH. A Helicase C-terminal domain is found at 886–1064; the sequence is LIVYLLKYIF…EVVLRVKMCQ (179 aa).

It belongs to the helicase family. SKI2 subfamily.

It localises to the cytoplasm. This is an uncharacterized protein from Schizosaccharomyces pombe (strain 972 / ATCC 24843) (Fission yeast).